The following is a 142-amino-acid chain: Large ribosomal subunit protein uL13 (142 aa).

This sequence belongs to the universal ribosomal protein uL13 family. In terms of assembly, part of the 50S ribosomal subunit.

Functionally, this protein is one of the early assembly proteins of the 50S ribosomal subunit, although it is not seen to bind rRNA by itself. It is important during the early stages of 50S assembly. This chain is Large ribosomal subunit protein uL13, found in Aeromonas hydrophila subsp. hydrophila (strain ATCC 7966 / DSM 30187 / BCRC 13018 / CCUG 14551 / JCM 1027 / KCTC 2358 / NCIMB 9240 / NCTC 8049).